The primary structure comprises 276 residues: Large ribosomal subunit protein uL2 (276 aa).

Disordered regions lie at residues 36-58 (PLHK…GGGH) and 214-276 (LGKR…RRKK).

It belongs to the universal ribosomal protein uL2 family. As to quaternary structure, part of the 50S ribosomal subunit. Forms a bridge to the 30S subunit in the 70S ribosome.

In terms of biological role, one of the primary rRNA binding proteins. Required for association of the 30S and 50S subunits to form the 70S ribosome, for tRNA binding and peptide bond formation. It has been suggested to have peptidyltransferase activity; this is somewhat controversial. Makes several contacts with the 16S rRNA in the 70S ribosome. This Halalkalibacterium halodurans (strain ATCC BAA-125 / DSM 18197 / FERM 7344 / JCM 9153 / C-125) (Bacillus halodurans) protein is Large ribosomal subunit protein uL2.